Here is a 225-residue protein sequence, read N- to C-terminus: UPF0758 protein NMB1038 (225 aa).

An MPN domain is found at 102–224; it reads VLSDPDTVAD…VCSFRQLGLM (123 aa). Histidine 173, histidine 175, and aspartate 186 together coordinate Zn(2+). A JAMM motif motif is present at residues 173–186; the sequence is HNHPGGSPEPSQED.

Belongs to the UPF0758 family.

This Neisseria meningitidis serogroup B (strain ATCC BAA-335 / MC58) protein is UPF0758 protein NMB1038.